The following is a 200-amino-acid chain: Gamma-glutamyl-CDP-amidate hydrolase (200 aa).

One can recognise a Glutamine amidotransferase type-1 domain in the interval 20 to 200 (ECLALDWGKL…LKEWFSLIKE (181 aa)). Cys101 serves as the catalytic Nucleophile. Active-site residues include His178 and Glu180.

The enzyme catalyses N(5)-(cytidine 5'-diphosphoramidyl)-L-glutamine + H2O = cytidine 5'-diphosphoramidate + L-glutamate + H(+). Its pathway is capsule biogenesis; capsule polysaccharide biosynthesis. Its function is as follows. Involved in the biosynthesis of the O-methyl phosphoramidate (MeOPN) group found on the capsular polysaccharide (CPS) of C.jejuni. Catalyzes the hydrolysis of CDP-L-glutamine to L-glutamate and cytidine diphosphoramidate. This chain is Gamma-glutamyl-CDP-amidate hydrolase, found in Campylobacter jejuni subsp. jejuni serotype O:2 (strain ATCC 700819 / NCTC 11168).